A 61-amino-acid chain; its full sequence is Large ribosomal subunit protein bL32 (61 aa).

Residues 1–10 show a composition bias toward basic residues; that stretch reads MAQPKKKTSN. The tract at residues 1-23 is disordered; that stretch reads MAQPKKKTSNAKRDQRRATWKRK.

The protein belongs to the bacterial ribosomal protein bL32 family.

The polypeptide is Large ribosomal subunit protein bL32 (Gloeobacter violaceus (strain ATCC 29082 / PCC 7421)).